The primary structure comprises 639 residues: Zinc finger protein ZIC 5 (639 aa).

Disordered stretches follow at residues 113–171 (PCGG…GHSR), 189–251 (HGAP…GHPH), 323–355 (PGPHLQHHAPPPAPPPPPAPAQHPHQHHPHLPG), and 379–409 (PDELAGLPPPPPPPPPPPPPPPAGGAKPCSK). The span at 124–150 (SAPPPPAPPLPPTPSPPPPPPPPPPPA) shows a compositional bias: pro residues. 2 stretches are compositionally biased toward pro residues: residues 331-343 (APPPAPPPPPAPA) and 385-401 (LPPPPPPPPPPPPPPPA). A C2H2-type 1; atypical zinc finger spans residues 434-461 (HVCFWEDCPREGKPFKAKYKLINHIRVH). 3 consecutive C2H2-type zinc fingers follow at residues 467 to 491 (FPCPFPGCGKVFARSENLKIHKRTH), 497 to 521 (FKCEFDGCDRKFANSSDRKKHSHVH), and 527 to 551 (YYCKIRGCDKSYTHPSSLRKHMKIH). Positions 548-568 (MKIHCKSPPPSPGPLGYSSVG) are disordered. Residues serine 554, serine 558, and serine 576 each carry the phosphoserine modification. Residues 607–639 (APSHLHTPSSNGTTSETEDEEIYGNPEVVRTIH) are disordered. Positions 612 to 621 (HTPSSNGTTS) are enriched in polar residues.

It belongs to the GLI C2H2-type zinc-finger protein family.

The protein localises to the nucleus. Essential for neural crest development, converting cells from an epidermal fate to a neural crest cell fate. Binds to DNA. In Homo sapiens (Human), this protein is Zinc finger protein ZIC 5 (ZIC5).